A 448-amino-acid chain; its full sequence is DNA primase DnaG (448 aa).

The Toprim domain maps to 186-260; sequence DSIIVVEGRN…EADFVARAPP (75 aa). Positions 192, 234, and 236 each coordinate Mg(2+). The segment at 318 to 340 is disordered; sequence AEVIEEPPEQPPKNEEIREEQSQ. A compositionally biased stretch (basic and acidic residues) spans 329-338; sequence PKNEEIREEQ.

It belongs to the archaeal DnaG primase family. In terms of assembly, forms a ternary complex with MCM helicase and DNA. Component of the archaeal exosome complex. Requires Mg(2+) as cofactor.

It carries out the reaction ssDNA + n NTP = ssDNA/pppN(pN)n-1 hybrid + (n-1) diphosphate.. RNA polymerase that catalyzes the synthesis of short RNA molecules used as primers for DNA polymerase during DNA replication. Also part of the exosome, which is a complex involved in RNA degradation. Acts as a poly(A)-binding protein that enhances the interaction between heteromeric, adenine-rich transcripts and the exosome. This chain is DNA primase DnaG, found in Thermoplasma acidophilum (strain ATCC 25905 / DSM 1728 / JCM 9062 / NBRC 15155 / AMRC-C165).